Reading from the N-terminus, the 105-residue chain is Large ribosomal subunit protein bL21 (105 aa).

Belongs to the bacterial ribosomal protein bL21 family. As to quaternary structure, part of the 50S ribosomal subunit. Contacts protein L20.

This protein binds to 23S rRNA in the presence of protein L20. The protein is Large ribosomal subunit protein bL21 of Treponema pallidum (strain Nichols).